The primary structure comprises 159 residues: Phosphopantetheine adenylyltransferase (159 aa).

Ser-8 is a substrate binding site. ATP contacts are provided by residues Ser-8–Phe-9 and His-16. Substrate is bound by residues Lys-40, Thr-72, and Arg-86. Residues Gly-87–Arg-89, Glu-97, and His-122–Ser-128 each bind ATP.

This sequence belongs to the bacterial CoaD family. Homohexamer. Mg(2+) serves as cofactor.

Its subcellular location is the cytoplasm. It carries out the reaction (R)-4'-phosphopantetheine + ATP + H(+) = 3'-dephospho-CoA + diphosphate. Its pathway is cofactor biosynthesis; coenzyme A biosynthesis; CoA from (R)-pantothenate: step 4/5. Reversibly transfers an adenylyl group from ATP to 4'-phosphopantetheine, yielding dephospho-CoA (dPCoA) and pyrophosphate. In Synechococcus sp. (strain JA-3-3Ab) (Cyanobacteria bacterium Yellowstone A-Prime), this protein is Phosphopantetheine adenylyltransferase.